The following is a 271-amino-acid chain: Tryptophan synthase alpha chain (271 aa).

Active-site proton acceptor residues include Glu49 and Asp60.

This sequence belongs to the TrpA family. In terms of assembly, tetramer of two alpha and two beta chains.

It carries out the reaction (1S,2R)-1-C-(indol-3-yl)glycerol 3-phosphate + L-serine = D-glyceraldehyde 3-phosphate + L-tryptophan + H2O. It participates in amino-acid biosynthesis; L-tryptophan biosynthesis; L-tryptophan from chorismate: step 5/5. The alpha subunit is responsible for the aldol cleavage of indoleglycerol phosphate to indole and glyceraldehyde 3-phosphate. In Burkholderia cenocepacia (strain HI2424), this protein is Tryptophan synthase alpha chain.